Here is a 274-residue protein sequence, read N- to C-terminus: MWPLCFLLNKLLRVEERNQGILDGNGDSTFPKYCLFDDPLVSDGKYRDAGLPSSSHMDVPHVHQLASWDCGLACVLMVLRASGIASCTLEDLAEICSTNSIWTVDLAYLLQKFCVEFSYYTITFGANPNYSIEEFYKEQLPEDLVRVDLLFRKAHESGIIIQCRSVSIHEISCLLLSGNYIAIALVDQDKLSKSWLEEVLVSGLHSSNSCYTGHYVVICGYDAVRDEFEIRDPASSKIHERISSKCLENARKSFGTDEDLLLINLENMRNQNGY.

In terms of assembly, functions both as monomer and homooligomer. Mg(2+) is required as a cofactor.

The catalysed reaction is GTP = 3',5'-cyclic GMP + diphosphate. It functions in the pathway nucleotide metabolism. Magnesium-dependent guanylyl cyclase that catalyzes the formation of guanosine 3',5'-cyclic monophosphate (cGMP) from guanosine 5'-triphosphate (GTP). Can also use ATP as substrate with a low activity. The polypeptide is Guanylyl cyclase 1 (Arabidopsis thaliana (Mouse-ear cress)).